Consider the following 88-residue polypeptide: Putative membrane protein insertion efficiency factor (88 aa).

The segment at 68-88 (VPPKKDKNADSEHSCKVHHHH) is disordered. A compositionally biased stretch (basic and acidic residues) spans 69-82 (PPKKDKNADSEHSC).

The protein belongs to the UPF0161 family.

The protein localises to the cell membrane. Could be involved in insertion of integral membrane proteins into the membrane. This is Putative membrane protein insertion efficiency factor from Listeria monocytogenes serovar 1/2a (strain ATCC BAA-679 / EGD-e).